Consider the following 356-residue polypeptide: Glutamine synthetase cytosolic isozyme 1-1 (356 aa).

Ser2 carries the N-acetylserine modification. 2 positions are modified to phosphoserine: Ser2 and Ser48. Residues 19–99 (IIAEYIWVGG…VMCDAYTPAG (81 aa)) form the GS beta-grasp domain. The disordered stretch occupies residues 36–62 (KARTLPGPVTDPSQLPKWNYDGSSTGQ). Residues 106-356 (KRHAAAKVFS…IAETTILWNP (251 aa)) form the GS catalytic domain.

This sequence belongs to the glutamine synthetase family. As to quaternary structure, homooctamer. Interacts with CRK3 and GRF3. Post-translationally, phosphorylated by CRK3. As to expression, expressed in root tips, root hairs and epidermis. Ubiquitously expressed with higher levels in siliques and roots.

The protein resides in the cytoplasm. The enzyme catalyses L-glutamate + NH4(+) + ATP = L-glutamine + ADP + phosphate + H(+). Its function is as follows. High-affinity glutamine synthetase which catalyzes the synthesis of glutamine from ammonium and glutamate. May contribute to the homeostatic control of glutamine synthesis in roots. The chain is Glutamine synthetase cytosolic isozyme 1-1 (GLN1-1) from Arabidopsis thaliana (Mouse-ear cress).